A 186-amino-acid polypeptide reads, in one-letter code: Enhancer of split m7 protein (186 aa).

A bHLH domain is found at 13–68; that stretch reads YRKVMKPLLERKRRARINKCLDELKDLMAECVAQTGDAKFEKADILEVTVQHLRKL. One can recognise an Orange domain in the interval 83–116; sequence FRAGYIRAANEVSRALASLPRVDVAFGTTLMTHL. Positions 183–186 match the WRPW motif motif; the sequence is WRPW.

As to quaternary structure, transcription repression requires formation of a complex with a corepressor protein (Groucho). Forms homodimers.

The protein localises to the nucleus. Its function is as follows. Participates in the control of cell fate choice by uncommitted neuroectodermal cells in the embryo. Transcriptional repressor. Binds DNA on N-box motifs: 5'-CACNAG-3'. This chain is Enhancer of split m7 protein, found in Drosophila melanogaster (Fruit fly).